We begin with the raw amino-acid sequence, 137 residues long: ATP synthase epsilon chain (137 aa).

It belongs to the ATPase epsilon chain family. F-type ATPases have 2 components, CF(1) - the catalytic core - and CF(0) - the membrane proton channel. CF(1) has five subunits: alpha(3), beta(3), gamma(1), delta(1), epsilon(1). CF(0) has three main subunits: a, b and c.

The protein resides in the cell inner membrane. Its function is as follows. Produces ATP from ADP in the presence of a proton gradient across the membrane. The chain is ATP synthase epsilon chain from Pseudoalteromonas atlantica (strain T6c / ATCC BAA-1087).